The following is a 222-amino-acid chain: Methylthioribulose-1-phosphate dehydratase (222 aa).

Histidine 94 and histidine 96 together coordinate Zn(2+).

This sequence belongs to the aldolase class II family. MtnB subfamily. Zn(2+) serves as cofactor.

It catalyses the reaction 5-(methylsulfanyl)-D-ribulose 1-phosphate = 5-methylsulfanyl-2,3-dioxopentyl phosphate + H2O. The protein operates within amino-acid biosynthesis; L-methionine biosynthesis via salvage pathway; L-methionine from S-methyl-5-thio-alpha-D-ribose 1-phosphate: step 2/6. Its function is as follows. Catalyzes the dehydration of methylthioribulose-1-phosphate (MTRu-1-P) into 2,3-diketo-5-methylthiopentyl-1-phosphate (DK-MTP-1-P). This is Methylthioribulose-1-phosphate dehydratase from Yersinia pseudotuberculosis serotype IB (strain PB1/+).